Reading from the N-terminus, the 281-residue chain is UPF0273 protein PAE3143 (281 aa).

The KaiC domain maps to 4–248; that stretch reads PRVRSYVPGL…YIKITGSSVR (245 aa). 31 to 38 contributes to the ATP binding site; it reads GGPGTGKS.

This sequence belongs to the UPF0273 family.

The sequence is that of UPF0273 protein PAE3143 from Pyrobaculum aerophilum (strain ATCC 51768 / DSM 7523 / JCM 9630 / CIP 104966 / NBRC 100827 / IM2).